The chain runs to 384 residues: Carbazole 1,9a-dioxygenase, terminal oxygenase component CarAa (384 aa).

The 107-residue stretch at 29–135 folds into the Rieske domain; that stretch reads WYPVMFSKEI…VQEAKGCVFI (107 aa). Residues cysteine 69, histidine 71, cysteine 90, and histidine 93 each coordinate [2Fe-2S] cluster.

As to quaternary structure, homotrimer. Carbazole 1,9a-dioxygenase complex consists of a terminal oxygenase component CarAa, a ferredoxin reductase component CarAd and a ferredoxin component CarAc. It depends on [2Fe-2S] cluster as a cofactor.

It catalyses the reaction 9H-carbazole + NADH + O2 + H(+) = 2'-aminobiphenyl-2,3-diol + NAD(+). The enzyme catalyses 9H-carbazole + NADPH + O2 + H(+) = 2'-aminobiphenyl-2,3-diol + NADP(+). Its function is as follows. Part of the multicomponent carbazole 1,9a-dioxygenase (CARDO), that converts carbazole (CAR) into 2-aminobiphenyl-2,3-diol. Catalyzes the dioxygenation at the angular (C-9a) and adjacent (C-1) positions of carbazole to yield a highly unstable cis-hydrodiol intermediate which is spontaneously converted to 2-aminobiphenyl-2,3-diol. It is also able to attack the angular position adjacent of hetero atom of heterocyclic aromatic compounds such as polychlorinated dibenzo-p-dioxin (DD) and dibenzofuran (DBF). It was also shown that CARDO has the ability to metabolize biphenyl and polycyclic aromatic hydrocarbons, such as naphthalene and phenanthrene. The protein is Carbazole 1,9a-dioxygenase, terminal oxygenase component CarAa (carAa) of Metapseudomonas resinovorans (Pseudomonas resinovorans).